Consider the following 322-residue polypeptide: Quinolinate synthase (322 aa).

Positions 37 and 54 each coordinate iminosuccinate. Residue cysteine 99 coordinates [4Fe-4S] cluster. Residues 125-127 (YIN) and serine 142 each bind iminosuccinate. Cysteine 185 contacts [4Fe-4S] cluster. Iminosuccinate is bound by residues 211–213 (HPE) and threonine 228. [4Fe-4S] cluster is bound at residue cysteine 278.

Belongs to the quinolinate synthase family. Type 2 subfamily. [4Fe-4S] cluster serves as cofactor.

The protein localises to the cytoplasm. The catalysed reaction is iminosuccinate + dihydroxyacetone phosphate = quinolinate + phosphate + 2 H2O + H(+). The protein operates within cofactor biosynthesis; NAD(+) biosynthesis; quinolinate from iminoaspartate: step 1/1. Its function is as follows. Catalyzes the condensation of iminoaspartate with dihydroxyacetone phosphate to form quinolinate. In Prosthecochloris aestuarii (strain DSM 271 / SK 413), this protein is Quinolinate synthase.